The following is a 93-amino-acid chain: Phosphoribosyl-ATP pyrophosphatase (93 aa).

This sequence belongs to the PRA-PH family.

Its subcellular location is the cytoplasm. The catalysed reaction is 1-(5-phospho-beta-D-ribosyl)-ATP + H2O = 1-(5-phospho-beta-D-ribosyl)-5'-AMP + diphosphate + H(+). The protein operates within amino-acid biosynthesis; L-histidine biosynthesis; L-histidine from 5-phospho-alpha-D-ribose 1-diphosphate: step 2/9. The sequence is that of Phosphoribosyl-ATP pyrophosphatase from Mycolicibacterium vanbaalenii (strain DSM 7251 / JCM 13017 / BCRC 16820 / KCTC 9966 / NRRL B-24157 / PYR-1) (Mycobacterium vanbaalenii).